The following is an 880-amino-acid chain: Leucine--tRNA ligase (880 aa).

Positions P46–H56 match the 'HIGH' region motif. The 'KMSKS' region signature appears at K638–S642. Position 641 (K641) interacts with ATP.

This sequence belongs to the class-I aminoacyl-tRNA synthetase family.

It is found in the cytoplasm. It carries out the reaction tRNA(Leu) + L-leucine + ATP = L-leucyl-tRNA(Leu) + AMP + diphosphate. This is Leucine--tRNA ligase from Xanthomonas oryzae pv. oryzae (strain KACC10331 / KXO85).